The following is a 231-amino-acid chain: PX domain-containing protein 1 (231 aa).

A PX domain is found at methionine 1 to glutamine 134.

The chain is PX domain-containing protein 1 (PXDC1) from Homo sapiens (Human).